The primary structure comprises 463 residues: MAELQIRKKEKKSGDGIGTMVDFLLANARLVLGVGGAAMLGIATLAVKRLIDRATSPPSDKEAEEKAEQKSIEESWKEAVLKKASPTLRRKEDLEHHCAPLSLPDPSQKMPEATGTSQVKASDEIKKIPICFTLQERLLNYHTHHASVPEVQMEEARQLVLDIKKELQEFLHAKHPEMPFLALHLGGSFGNRLPMSCLDHACLIMPLVLEPDLWCVIPGQKTILSDPNFCMVKRIDLEYTSRGSSPWDRFLVGAYLSSRTMVQSLHKTIVGSINWPAIGTVLDCTIKPDITSDELKLEVVHPNGHMIIRILPMAVIKDADLLAHCCATAPAENLWQRSFYKKEVSRLQELDSSDSGIRLKCLQILKGICRDCPSLCHLNSTHLRHILLHLSTESSDWTETALADRFLQVLEELIGYLDKGFLPSYFNDKLNLFSSLKAEDIEELGYGLYQVFSEPDDVLKRER.

Over 1–24 the chain is Mitochondrial intermembrane; the sequence is MAELQIRKKEKKSGDGIGTMVDFL. A helical membrane pass occupies residues 25–47; the sequence is LANARLVLGVGGAAMLGIATLAV. The Cytoplasmic segment spans residues 48–463; the sequence is KRLIDRATSP…EPDDVLKRER (416 aa). A disordered region spans residues 87–119; the sequence is TLRRKEDLEHHCAPLSLPDPSQKMPEATGTSQV. The span at 89–98 shows a compositional bias: basic and acidic residues; it reads RRKEDLEHHC.

This sequence belongs to the MID49/MID51 family.

It is found in the mitochondrion outer membrane. Mitochondrial outer membrane protein which regulates mitochondrial organization. It is required for mitochondrial fission and promotes the recruitment and association of the fission mediator dynamin-related protein 1 (DNM1L) to the mitochondrial surface independently of the mitochondrial fission FIS1 and MFF proteins. Regulates DNM1L GTPase activity. The polypeptide is Mitochondrial dynamics protein MID49 (mief2) (Xenopus laevis (African clawed frog)).